A 209-amino-acid polypeptide reads, in one-letter code: Redox-sensing transcriptional repressor Rex (209 aa).

A DNA-binding region (H-T-H motif) is located at residues 16 to 55; it reads LYYRFIQNLSLSGKQRVSSAELSEAVKVDSATIRRDFSYF. 90-95 is an NAD(+) binding site; that stretch reads GVGNLG.

This sequence belongs to the transcriptional regulatory Rex family. Homodimer.

It localises to the cytoplasm. Functionally, modulates transcription in response to changes in cellular NADH/NAD(+) redox state. The polypeptide is Redox-sensing transcriptional repressor Rex (Bacillus cereus (strain Q1)).